The sequence spans 379 residues: Homoserine O-succinyltransferase (379 aa).

The region spanning 51-360 (NAVLICHALS…DSPYGHDAFL (310 aa)) is the AB hydrolase-1 domain. Catalysis depends on Ser-157, which acts as the Nucleophile. Residue Arg-227 participates in substrate binding. Residues Asp-323 and His-356 contribute to the active site. Asp-357 lines the substrate pocket.

Belongs to the AB hydrolase superfamily. MetX family. In terms of assembly, homodimer.

It is found in the cytoplasm. It carries out the reaction L-homoserine + succinyl-CoA = O-succinyl-L-homoserine + CoA. The protein operates within amino-acid biosynthesis; L-methionine biosynthesis via de novo pathway; O-succinyl-L-homoserine from L-homoserine: step 1/1. Transfers a succinyl group from succinyl-CoA to L-homoserine, forming succinyl-L-homoserine. The polypeptide is Homoserine O-succinyltransferase (Pseudomonas putida (strain ATCC 700007 / DSM 6899 / JCM 31910 / BCRC 17059 / LMG 24140 / F1)).